The chain runs to 270 residues: Orotidine 5'-phosphate decarboxylase (270 aa).

K89 functions as the Proton donor in the catalytic mechanism.

The protein belongs to the OMP decarboxylase family. Type 2 subfamily.

It catalyses the reaction orotidine 5'-phosphate + H(+) = UMP + CO2. Its pathway is pyrimidine metabolism; UMP biosynthesis via de novo pathway; UMP from orotate: step 2/2. The protein is Orotidine 5'-phosphate decarboxylase of Dehalococcoides mccartyi (strain ATCC BAA-2266 / KCTC 15142 / 195) (Dehalococcoides ethenogenes (strain 195)).